We begin with the raw amino-acid sequence, 253 residues long: Claudin domain-containing protein 1 (253 aa).

A helical membrane pass occupies residues 5-25 (FATAFVIACVLSLISTIYMAA). Residues asparagine 42 and asparagine 72 are each glycosylated (N-linked (GlcNAc...) asparagine). 3 helical membrane-spanning segments follow: residues 141–161 (FLLP…GLCA), 175–195 (ILHL…VAGI), and 216–236 (FCLA…FIWA).

This sequence belongs to the PMP-22/EMP/MP20 family. As to expression, widely distributed in the adult CNS with highest expression in the corpus callosum, caudate nucleus, cerebral cortex, medulla, putamen, spinal cord, substantia nigra and subthalamic nucleus. Weak expression was detected in the adult heart.

It localises to the cell junction. It is found in the tight junction. The protein localises to the cell membrane. In terms of biological role, plays a role in negatively regulating the permeability of cells to small molecules. This chain is Claudin domain-containing protein 1 (CLDND1), found in Homo sapiens (Human).